The primary structure comprises 60 residues: Large ribosomal subunit protein bL32 (60 aa).

Residues 1-60 (MAVQQVKKSRSKRDMRRSHDSLTNPTLSTDKSTGELHLRHHVSPNGFYKGRKVVDTKSED) form a disordered region. Over residues 7–16 (KKSRSKRDMR) the composition is skewed to basic residues. Polar residues predominate over residues 22–31 (LTNPTLSTDK).

It belongs to the bacterial ribosomal protein bL32 family.

The chain is Large ribosomal subunit protein bL32 from Francisella tularensis subsp. holarctica (strain LVS).